We begin with the raw amino-acid sequence, 430 residues long: Corticosteroid-binding globulin (430 aa).

The N-terminal stretch at 1–22 is a signal peptide; that stretch reads MLLTLYTCLLWLSTSGLWTIQA. N-linked (GlcNAc...) asparagine glycosylation is found at asparagine 119, asparagine 175, and asparagine 243. Glutamine 253 serves as a coordination point for cortisol. Asparagine 259 is a glycosylation site (N-linked (GlcNAc...) asparagine). A cortisol-binding site is contributed by glutamine 285. N-linked (GlcNAc...) asparagine glycosylation is present at asparagine 326. Tryptophan 392 contacts cortisol.

This sequence belongs to the serpin family. Expressed by the liver; secreted in plasma.

The protein localises to the secreted. Major transport protein for glucocorticoids and progestins in the blood of almost all vertebrate species. This Ovis aries (Sheep) protein is Corticosteroid-binding globulin (SERPINA6).